Here is a 523-residue protein sequence, read N- to C-terminus: PDHGFCQPISIPLCTDIAYNQTIMPNLLGHTNQEDAGLEVHQFYPLVKVQCSLELKFFLCSMYAPVCTVLEQAIPPCRSICERARQGCEALMNKFGFQWPERLRCENFPRHGAEQICVGQNHSEDGGSSAALLTSAAPPAAHGTPGAPRYATPDRPFHCPRALKVPGYLNYKFLGEKDCAAPCEPSRPDGHMFFNEDEIRFARVWILVWSVLCCASTFFTVTTYLVDMQRFRYPERPIIFLSGCYTMVSVAYIAGFVLEERVVCNERFQEDGYRTVVQGTKKEGCTILFMMLYFFSMASSIWWVILSLTWFLAAGMKWGHEAIEANSQYFHLAAWAVPAVKTITILAMGQIDGDLLSGVCFVGLNGIDPLRGFVLAPLFVYLFIGTSFLLAGFVSLFRIRTIMKHGGTKTEKLERLMVRIGVFSVLYTVPATIVIACYFYEQAFRQHWERSWISQHCKSLAIPCPLHFTPRMTPDFTVYMIKYLMTLIVGITSGFWIFSGKTLHSWRKFYTRLTNSRQGETTV.

The region spanning 1 to 120 is the FZ domain; that stretch reads PDHGFCQPIS…HGAEQICVGQ (120 aa). Over 1-205 the chain is Extracellular; sequence PDHGFCQPIS…EDEIRFARVW (205 aa). 5 cysteine pairs are disulfide-bonded: Cys6–Cys67, Cys14–Cys60, Cys51–Cys88, Cys77–Cys117, and Cys81–Cys105. An N-linked (GlcNAc...) asparagine glycan is attached at Asn20. Residue Asn121 is glycosylated (N-linked (GlcNAc...) asparagine). Residues 206–226 form a helical membrane-spanning segment; the sequence is ILVWSVLCCASTFFTVTTYLV. Topologically, residues 227–237 are cytoplasmic; that stretch reads DMQRFRYPERP. A helical transmembrane segment spans residues 238–258; the sequence is IIFLSGCYTMVSVAYIAGFVL. The Extracellular portion of the chain corresponds to 259–285; that stretch reads EERVVCNERFQEDGYRTVVQGTKKEGC. A helical transmembrane segment spans residues 286–306; it reads TILFMMLYFFSMASSIWWVIL. The Cytoplasmic portion of the chain corresponds to 307–328; sequence SLTWFLAAGMKWGHEAIEANSQ. The helical transmembrane segment at 329-349 threads the bilayer; that stretch reads YFHLAAWAVPAVKTITILAMG. The Extracellular portion of the chain corresponds to 350–372; that stretch reads QIDGDLLSGVCFVGLNGIDPLRG. A helical transmembrane segment spans residues 373-393; that stretch reads FVLAPLFVYLFIGTSFLLAGF. Topologically, residues 394–419 are cytoplasmic; sequence VSLFRIRTIMKHGGTKTEKLERLMVR. A helical membrane pass occupies residues 420-440; it reads IGVFSVLYTVPATIVIACYFY. Topologically, residues 441–477 are extracellular; the sequence is EQAFRQHWERSWISQHCKSLAIPCPLHFTPRMTPDFT. Residues 478-498 traverse the membrane as a helical segment; it reads VYMIKYLMTLIVGITSGFWIF. The Cytoplasmic segment spans residues 499 to 523; sequence SGKTLHSWRKFYTRLTNSRQGETTV. A Lys-Thr-X-X-X-Trp motif, mediates interaction with the PDZ domain of Dvl family members motif is present at residues 501-506; the sequence is KTLHSW. Positions 521 to 523 match the PDZ-binding motif; it reads TTV.

This sequence belongs to the G-protein coupled receptor Fz/Smo family. In terms of tissue distribution, expressed in the developing head and limbs. Expressed broadly in cranial ectoderm. Also expressed in the developing somites (dermomyotome) and in other cranial placodes, including the olfactory, lens, and otic placodes (rostral rim of the vesicle).

Its subcellular location is the membrane. The protein resides in the cell membrane. Receptor for Wnt proteins. Most of frizzled receptors are coupled to the beta-catenin canonical signaling pathway, which leads to the activation of disheveled proteins, inhibition of GSK-3 kinase, nuclear accumulation of beta-catenin and activation of Wnt target genes. A second signaling pathway involving PKC and calcium fluxes has been seen for some family members, but it is not yet clear if it represents a distinct pathway or if it can be integrated in the canonical pathway, as PKC seems to be required for Wnt-mediated inactivation of GSK-3 kinase. Both pathways seem to involve interactions with G-proteins. May be involved in transduction and intercellular transmission of polarity information during tissue morphogenesis and/or in differentiated tissues. This is Frizzled-2 (FZD2) from Gallus gallus (Chicken).